The chain runs to 590 residues: Mitochondrial distribution and morphology protein 34 (590 aa).

Residues 1 to 225 form the SMP-LTD domain; it reads MSFIFNRETF…LPSVIFNMSQ (225 aa). Basic residues predominate over residues 393 to 405; that stretch reads RRKIKMRSRKPSK. The segment at 393–456 is disordered; it reads RRKIKMRSRK…APEGGPNAED (64 aa). Over residues 413 to 427 the composition is skewed to polar residues; it reads PAQNDSGTSSCSNVA.

It belongs to the MDM34 family. Component of the ER-mitochondria encounter structure (ERMES) or MDM complex, composed of MMM1, MDM10, MDM12 and MDM34.

It localises to the mitochondrion outer membrane. In terms of biological role, component of the ERMES/MDM complex, which serves as a molecular tether to connect the endoplasmic reticulum (ER) and mitochondria. Components of this complex are involved in the control of mitochondrial shape and protein biogenesis, and function in nonvesicular lipid trafficking between the ER and mitochondria. MDM34 is required for the interaction of the ER-resident membrane protein MMM1 and the outer mitochondrial membrane-resident beta-barrel protein MDM10. The sequence is that of Mitochondrial distribution and morphology protein 34 from Eremothecium gossypii (strain ATCC 10895 / CBS 109.51 / FGSC 9923 / NRRL Y-1056) (Yeast).